Here is a 481-residue protein sequence, read N- to C-terminus: Cholesterol 16,22-dihydroxylase CYP90G4 (481 aa).

Residues 4–24 (SYLSFFVLSSILVLTLIFFFM) form a helical membrane-spanning segment. C426 contributes to the heme binding site.

The protein belongs to the cytochrome P450 family. As to expression, mainly expressed in leaves and seed pods and, at low levels, in flowers and stems.

Its subcellular location is the membrane. It participates in steroid metabolism; cholesterol metabolism. In terms of biological role, involved in the biosynthesis of spiroketal steroid and saponin natural products from cholesterol such as diosgenin and analogs (e.g. furostanol and spirostanol), plant defense compounds used as main precursors for the industrial production of steroid hormones. During the 5,6-spiroketalization of cholesterol, catalyzes the hydroxylation of cholesterol to form 16S,22S-dihydroxycholesterol and, possibly, the subsequent conversion of 16S,22S-dihydroxycholesterol into 16-oxo-22-hydroxy-cholesterol and 16-hydroxy-22-oxo-cholesterol. 16-hydroxy-22-oxo-cholesterol submit a spontaneous reaction leading to the production of furostanol-type steroid diastereomers, precursors of diosgenin. The polypeptide is Cholesterol 16,22-dihydroxylase CYP90G4 (Trigonella foenum-graecum (Fenugreek)).